The following is a 101-amino-acid chain: Small ribosomal subunit protein bS18c (101 aa).

The protein belongs to the bacterial ribosomal protein bS18 family. Part of the 30S ribosomal subunit.

It is found in the plastid. Its subcellular location is the chloroplast. This chain is Small ribosomal subunit protein bS18c, found in Aethionema grandiflorum (Persian stone-cress).